A 358-amino-acid chain; its full sequence is Peptide chain release factor 1 (358 aa).

Residue Q235 is modified to N5-methylglutamine.

The protein belongs to the prokaryotic/mitochondrial release factor family. Post-translationally, methylated by PrmC. Methylation increases the termination efficiency of RF1.

Its subcellular location is the cytoplasm. Functionally, peptide chain release factor 1 directs the termination of translation in response to the peptide chain termination codons UAG and UAA. This chain is Peptide chain release factor 1, found in Neisseria meningitidis serogroup C (strain 053442).